A 78-amino-acid chain; its full sequence is Large ribosomal subunit protein bL28 (78 aa).

The protein belongs to the bacterial ribosomal protein bL28 family.

The protein is Large ribosomal subunit protein bL28 of Bordetella avium (strain 197N).